Consider the following 501-residue polypeptide: Glycerol kinase (501 aa).

T11 contacts ADP. Positions 11, 12, and 13 each coordinate ATP. Residue T11 participates in sn-glycerol 3-phosphate binding. Residue R15 participates in ADP binding. The sn-glycerol 3-phosphate site is built by R81, E82, Y133, and D242. The glycerol site is built by R81, E82, Y133, D242, and Q243. Residues T264 and G307 each coordinate ADP. Residues T264, G307, Q311, and G409 each coordinate ATP. 2 residues coordinate ADP: G409 and N413.

The protein belongs to the FGGY kinase family.

It carries out the reaction glycerol + ATP = sn-glycerol 3-phosphate + ADP + H(+). Its pathway is polyol metabolism; glycerol degradation via glycerol kinase pathway; sn-glycerol 3-phosphate from glycerol: step 1/1. With respect to regulation, inhibited by fructose 1,6-bisphosphate (FBP). Functionally, key enzyme in the regulation of glycerol uptake and metabolism. Catalyzes the phosphorylation of glycerol to yield sn-glycerol 3-phosphate. The polypeptide is Glycerol kinase (Borreliella burgdorferi (strain ATCC 35210 / DSM 4680 / CIP 102532 / B31) (Borrelia burgdorferi)).